A 295-amino-acid polypeptide reads, in one-letter code: MPWIQLKINTSGNVAEQLGDAMIESGAVSVTFQDTHDTPVFEPLPGETRLWGDTDAIALYDAETDMNDVIAMLEQEPLLGVGFKHKIEQLEDKDWEREWMDNFHPMQFGKRLWICPSWRDIPDPTAVNVMLDPGLAFGTGTHPTTALCLQWLDGLDLEGKTIIDFGCGSGILAIAALKLGAARAIGIDIDPQAIQASRDNAQRNGVSERLELYLPKDQPADLSADVVVANILAGPLRELAPLISDLPKAGGHLGLSGVLATQADGVAEAYADKFTLDPVAEREEWCRITGQRRAS.

Thr145, Gly166, Asp188, and Asn230 together coordinate S-adenosyl-L-methionine.

This sequence belongs to the methyltransferase superfamily. PrmA family.

The protein localises to the cytoplasm. It carries out the reaction L-lysyl-[protein] + 3 S-adenosyl-L-methionine = N(6),N(6),N(6)-trimethyl-L-lysyl-[protein] + 3 S-adenosyl-L-homocysteine + 3 H(+). Methylates ribosomal protein L11. The polypeptide is Ribosomal protein L11 methyltransferase (Pectobacterium carotovorum subsp. carotovorum (strain PC1)).